Reading from the N-terminus, the 257-residue chain is Neurotrophin-3 (257 aa).

An N-terminal signal peptide occupies residues 1-18 (MSILFYMIFLAYLRGIQG). The propeptide occupies 19-138 (NSMDQRRLPE…VANRTARRKR (120 aa)). Residues 61–81 (STLPKAEAPREPERGEPAKSE) are disordered. Over residues 67-79 (EAPREPERGEPAK) the composition is skewed to basic and acidic residues. An N-linked (GlcNAc...) asparagine glycan is attached at asparagine 131. 3 cysteine pairs are disulfide-bonded: cysteine 152-cysteine 217, cysteine 195-cysteine 246, and cysteine 205-cysteine 248.

It belongs to the NGF-beta family.

The protein localises to the secreted. Seems to promote the survival of visceral and proprioceptive sensory neurons. This is Neurotrophin-3 (NTF3) from Sus scrofa (Pig).